Here is a 436-residue protein sequence, read N- to C-terminus: Glutamate-1-semialdehyde 2,1-aminomutase (436 aa).

Lys274 bears the N6-(pyridoxal phosphate)lysine mark.

This sequence belongs to the class-III pyridoxal-phosphate-dependent aminotransferase family. HemL subfamily. Homodimer. Pyridoxal 5'-phosphate serves as cofactor.

The protein resides in the cytoplasm. It catalyses the reaction (S)-4-amino-5-oxopentanoate = 5-aminolevulinate. The protein operates within porphyrin-containing compound metabolism; protoporphyrin-IX biosynthesis; 5-aminolevulinate from L-glutamyl-tRNA(Glu): step 2/2. This is Glutamate-1-semialdehyde 2,1-aminomutase from Albidiferax ferrireducens (strain ATCC BAA-621 / DSM 15236 / T118) (Rhodoferax ferrireducens).